The following is a 696-amino-acid chain: MNKIRKTFQYGKHEVTFETGEMARQATGAVVVRMGDTVLLVSVVAKKEAEEGRDFFPLTVNYQEKTYAAGKIPGGYFKREGRPTEKETLTSRLIDRPLRPLFPKGFTNEVQVIATVLSVDSKVPTDIPAILGASAAIGLSGIPFNGSLGAARVGYRGGEYLLNPSLDELKDSALDLVVAGTRDAVLMVESEAQELPESVMLGAVLHGHQAMQVAIQAIAEFIQEAGGAKWEWEPPTVNTALEKLVVEKSEAPLKKAYQIQEKTARQAQIQAIRDQLLADRAAEREGEENAVNEHELAVIFHELERRIVREQILTGQPRIDGRDTKTVRPITVKVGVLPRSHGSALFTRGETQALVVTTLGTERDAQSIDDLDGDRQEEFIFHYNFPPFCVGEVGFMSGPKRREIGHGRLAKRAVVPVVPTLDKFPYVIRVVSEILESNGSSSMASVCGSSLALMDAGVPTKAPVAGIAMGLIKENDKYAVLSDILGDEDHLGDMDFKVAGTSNGVTALQMDIKIEGITKEIMEQALDQAKEGRLHILSIMNKVLDKPRSQVSDLAPQYVTMKINPEKIRDVIGKGGVVIREITEATNCAIDISDDGTIKIAAHTTEEGEAAKRRIEELTAEVELGKVYEGTVVKITDFGAFVQILPNTQGLVHISQIAQERVENVRDYLEEGQVIRVKVIEIDRQGRVRLSMKQID.

2 residues coordinate Mg(2+): aspartate 489 and aspartate 495. The KH domain occupies 556–615; the sequence is PQYVTMKINPEKIRDVIGKGGVVIREITEATNCAIDISDDGTIKIAAHTTEEGEAAKRRI. Residues 625 to 693 form the S1 motif domain; it reads GKVYEGTVVK…RQGRVRLSMK (69 aa).

Belongs to the polyribonucleotide nucleotidyltransferase family. In terms of assembly, component of the RNA degradosome, which is a multiprotein complex involved in RNA processing and mRNA degradation. Mg(2+) is required as a cofactor.

Its subcellular location is the cytoplasm. It carries out the reaction RNA(n+1) + phosphate = RNA(n) + a ribonucleoside 5'-diphosphate. Involved in mRNA degradation. Catalyzes the phosphorolysis of single-stranded polyribonucleotides processively in the 3'- to 5'-direction. The chain is Polyribonucleotide nucleotidyltransferase from Coxiella burnetii (strain CbuK_Q154) (Coxiella burnetii (strain Q154)).